Consider the following 94-residue polypeptide: Pyrimidine/purine nucleoside phosphorylase 2 (94 aa).

This sequence belongs to the nucleoside phosphorylase PpnP family.

It catalyses the reaction a purine D-ribonucleoside + phosphate = a purine nucleobase + alpha-D-ribose 1-phosphate. The catalysed reaction is adenosine + phosphate = alpha-D-ribose 1-phosphate + adenine. It carries out the reaction cytidine + phosphate = cytosine + alpha-D-ribose 1-phosphate. The enzyme catalyses guanosine + phosphate = alpha-D-ribose 1-phosphate + guanine. It catalyses the reaction inosine + phosphate = alpha-D-ribose 1-phosphate + hypoxanthine. The catalysed reaction is thymidine + phosphate = 2-deoxy-alpha-D-ribose 1-phosphate + thymine. It carries out the reaction uridine + phosphate = alpha-D-ribose 1-phosphate + uracil. The enzyme catalyses xanthosine + phosphate = alpha-D-ribose 1-phosphate + xanthine. Catalyzes the phosphorolysis of diverse nucleosides, yielding D-ribose 1-phosphate and the respective free bases. Can use uridine, adenosine, guanosine, cytidine, thymidine, inosine and xanthosine as substrates. Also catalyzes the reverse reactions. This chain is Pyrimidine/purine nucleoside phosphorylase 2, found in Psychrobacter cryohalolentis (strain ATCC BAA-1226 / DSM 17306 / VKM B-2378 / K5).